The chain runs to 437 residues: Probable N-acetylmuramidase (437 aa).

Positions 1–57 are cleaved as a signal peptide; sequence MPVSRVKVKNRHLKKKTKKPLAFYKPATKFAGAVLIAGTLTTTHELLLQQTSPMVQA. Disordered regions lie at residues 217-244, 290-320, and 367-392; these read SSAGNTNSGGSTTTITNNNSGTNSSSTT, ASSTNSGGSNNSASTTPTTSVTPAKPTSQTT, and AASNPSTGSGSTATNNSNSTSSNSNA. One can recognise a LysM 1 domain in the interval 243–286; that stretch reads TTYTVKSGDTLWGISQRYGISVAQIQSANNLKSTIIYIGQKLVL. Low complexity predominate over residues 290 to 317; it reads ASSTNSGGSNNSASTTPTTSVTPAKPTS. A LysM 2 domain is found at 319–362; the sequence is TTVKVKSGDTLWALSVKYKTSIAQLKSWNHLSSDTIYIGQNLIV. The 44-residue stretch at 393–436 folds into the LysM 3 domain; that stretch reads SIHKVVKGDTLWGLSQKSGSPIASIKAWNHLSSDTILIGQYLRI.

It belongs to the glycosyl hydrolase 73 family.

Its subcellular location is the secreted. It carries out the reaction Hydrolysis of (1-&gt;4)-beta-linkages between N-acetylmuramic acid and N-acetyl-D-glucosamine residues in a peptidoglycan and between N-acetyl-D-glucosamine residues in chitodextrins.. Hydrolyzes the cell wall of L.lactis and M.lysodeikticus. Required for cell separation during growth. In Lactococcus lactis subsp. cremoris (strain MG1363), this protein is Probable N-acetylmuramidase (acmA).